Reading from the N-terminus, the 580-residue chain is Putative multidrug export ATP-binding/permease protein YgaD (580 aa).

At 1–17 (MGVMKRYMQFVKPYKKQ) the chain is on the cytoplasmic side. A helical transmembrane segment spans residues 18 to 38 (IFVTVLIGIVKFSIPLALPLL). Residues 19 to 307 (FVTVLIGIVK…LINSSTTLTQ (289 aa)) enclose the ABC transmembrane type-1 domain. The Extracellular portion of the chain corresponds to 39-57 (LKYVVDDIIQGGGTASDKT). Residues 58–78 (TSLFTIMAIMFALFLILRPPV) traverse the membrane as a helical segment. At 79–135 (EYYRQYFAQWTASKVLYDIRAKLFDHIQKLSLRFYANTRTGEVISRVINDVEQTKDF) the chain is on the cytoplasmic side. The chain crosses the membrane as a helical span at residues 136–156 (VITGLMNIWLDMLTILIVISI). The Extracellular segment spans residues 157–163 (MLTLDVK). The helical transmembrane segment at 164-184 (LTLISIVLFPLYGISVKYFYG) threads the bilayer. At 185–243 (RLRKLTRERSQALAQVQGHLHERIQGMPVIRSFAIEDHEQAQFNEKNGHFLDKAIRHTN) the chain is on the cytoplasmic side. Residues 244 to 263 (WNAKTFAVVNTITDLAPLIV) traverse the membrane as a helical segment. Over 264 to 268 (IACAG) the chain is Extracellular. The chain crosses the membrane as a helical span at residues 269–288 (YFVINGPLTVGTMVAFVGYI). Topologically, residues 289-580 (DRMYNPVRRL…KHLFTIQNLN (292 aa)) are cytoplasmic. An ABC transporter domain is found at 341-576 (VEFQNVSFQY…ESQYKHLFTI (236 aa)). 375 to 382 (GMSGGGKS) lines the ATP pocket.

This sequence belongs to the ABC transporter superfamily. As to quaternary structure, homodimer.

The protein resides in the cell membrane. May be involved in multidrug export. Transmembrane domains (TMD) form a pore in the cell membrane and the ATP-binding domain (NBD) is responsible for energy generation. The sequence is that of Putative multidrug export ATP-binding/permease protein YgaD (ygaD) from Bacillus subtilis (strain 168).